We begin with the raw amino-acid sequence, 264 residues long: 3-methyl-2-oxobutanoate hydroxymethyltransferase (264 aa).

Asp44 and Asp83 together coordinate Mg(2+). Residues 44 to 45 (DS), Asp83, and Lys111 each bind 3-methyl-2-oxobutanoate. Glu113 is a Mg(2+) binding site. Catalysis depends on Glu180, which acts as the Proton acceptor.

Belongs to the PanB family. Homodecamer; pentamer of dimers. Mg(2+) serves as cofactor.

It is found in the cytoplasm. It catalyses the reaction 3-methyl-2-oxobutanoate + (6R)-5,10-methylene-5,6,7,8-tetrahydrofolate + H2O = 2-dehydropantoate + (6S)-5,6,7,8-tetrahydrofolate. It participates in cofactor biosynthesis; (R)-pantothenate biosynthesis; (R)-pantoate from 3-methyl-2-oxobutanoate: step 1/2. Catalyzes the reversible reaction in which hydroxymethyl group from 5,10-methylenetetrahydrofolate is transferred onto alpha-ketoisovalerate to form ketopantoate. This chain is 3-methyl-2-oxobutanoate hydroxymethyltransferase, found in Marinobacter nauticus (strain ATCC 700491 / DSM 11845 / VT8) (Marinobacter aquaeolei).